The sequence spans 484 residues: tRNA sulfurtransferase (484 aa).

Positions 63–167 (ERLVEALKCI…NKDLFIVTQR (105 aa)) constitute a THUMP domain. ATP is bound by residues 185–186 (LM), Lys-267, Gly-289, and Gln-298. The cysteines at positions 346 and 458 are disulfide-linked. Residues 406–484 (IPENAVVVDI…GFKNVKVYRP (79 aa)) form the Rhodanese domain. The active-site Cysteine persulfide intermediate is Cys-458.

It belongs to the ThiI family.

The protein localises to the cytoplasm. The enzyme catalyses [ThiI sulfur-carrier protein]-S-sulfanyl-L-cysteine + a uridine in tRNA + 2 reduced [2Fe-2S]-[ferredoxin] + ATP + H(+) = [ThiI sulfur-carrier protein]-L-cysteine + a 4-thiouridine in tRNA + 2 oxidized [2Fe-2S]-[ferredoxin] + AMP + diphosphate. The catalysed reaction is [ThiS sulfur-carrier protein]-C-terminal Gly-Gly-AMP + S-sulfanyl-L-cysteinyl-[cysteine desulfurase] + AH2 = [ThiS sulfur-carrier protein]-C-terminal-Gly-aminoethanethioate + L-cysteinyl-[cysteine desulfurase] + A + AMP + 2 H(+). It participates in cofactor biosynthesis; thiamine diphosphate biosynthesis. Catalyzes the ATP-dependent transfer of a sulfur to tRNA to produce 4-thiouridine in position 8 of tRNAs, which functions as a near-UV photosensor. Also catalyzes the transfer of sulfur to the sulfur carrier protein ThiS, forming ThiS-thiocarboxylate. This is a step in the synthesis of thiazole, in the thiamine biosynthesis pathway. The sulfur is donated as persulfide by IscS. The protein is tRNA sulfurtransferase of Colwellia psychrerythraea (strain 34H / ATCC BAA-681) (Vibrio psychroerythus).